The chain runs to 334 residues: NADH dehydrogenase (ubiquinone) complex I, assembly factor 6 homolog (334 aa).

The transit peptide at 1–11 directs the protein to the mitochondrion; it reads MRRLVRNWNCR.

The protein belongs to the NDUFAF6 family. As to quaternary structure, associates with mitochondrial complex I assembly intermediates during its biogenesis. Forms a complex including sicily, ND-42 and Hsp83; the complex is necessary to chaperone ND-42 in the cytoplasm before mitochondrial import; the interaction between sicily and ND-42 is direct and occurs preferably between the unprocessed forms in the cytoplasm; the interaction with Hsp83 is direct. Interacts with ND-30; interaction is stronger between the unprocessed forms in the cytoplasm. In terms of tissue distribution, expressed in the ventral nerve cord, larval brain, motor neuron axons, imaginal disks, and muscles (at protein level).

It is found in the mitochondrion inner membrane. It localises to the cytoplasm. The protein localises to the cytosol. Functionally, involved in the assembly of mitochondrial NADH:ubiquinone oxidoreductase complex (Complex I) at early stages. Interacts with cytosolic Hsp90 to chaperone the Complex I subunit ND-42 in the cytoplasm. This Drosophila melanogaster (Fruit fly) protein is NADH dehydrogenase (ubiquinone) complex I, assembly factor 6 homolog.